A 161-amino-acid polypeptide reads, in one-letter code: MQDAITAVINAADVQGKYLDTASVEKLKSYFQTGELRVRAAATIAANSSAIIKEAVAKSLLYSDITRPGGNMYTTRRYAACIRDLDYYVRYATYAMLAGDTSILDERVLNGLKETYNSLGVPVGATIQAIQAAKEVTAGLVGPDAGREMGIYYDYISSGLG.

Residue N71 is modified to N4-methylasparagine. C81 contributes to the (2R,3E)-phycocyanobilin binding site.

Belongs to the phycobiliprotein family. Heterodimer of an alpha and a beta chain. In terms of processing, contains one covalently linked phycocyanobilin chromophore.

The protein resides in the plastid. It localises to the cyanelle thylakoid membrane. In terms of biological role, light-harvesting photosynthetic bile pigment-protein from the phycobiliprotein complex. Allophycocyanin has a maximum absorption at approximately 650 nanometers. This is Allophycocyanin beta chain (apcB) from Cyanophora paradoxa.